A 178-amino-acid chain; its full sequence is Large ribosomal subunit protein uL5 (178 aa).

The protein belongs to the universal ribosomal protein uL5 family. As to quaternary structure, part of the 50S ribosomal subunit; part of the 5S rRNA/L5/L18/L25 subcomplex. Contacts the 5S rRNA and the P site tRNA. Forms a bridge to the 30S subunit in the 70S ribosome.

Functionally, this is one of the proteins that bind and probably mediate the attachment of the 5S RNA into the large ribosomal subunit, where it forms part of the central protuberance. In the 70S ribosome it contacts protein S13 of the 30S subunit (bridge B1b), connecting the 2 subunits; this bridge is implicated in subunit movement. Contacts the P site tRNA; the 5S rRNA and some of its associated proteins might help stabilize positioning of ribosome-bound tRNAs. This is Large ribosomal subunit protein uL5 from Aliivibrio fischeri (strain ATCC 700601 / ES114) (Vibrio fischeri).